The following is a 287-amino-acid chain: CBK1 kinase activator protein MOB2 (287 aa).

The tract at residues 1-89 (MSFFNFKAFG…QQQEASERSE (89 aa)) is disordered. Tyr33 bears the Phosphotyrosine mark. Residues 34 to 44 (SSPHSSNSRLS) show a composition bias toward low complexity. Residues 45-56 (LRNKHHSPKRHS) are compositionally biased toward basic residues. Ser59 is modified (phosphoserine). Low complexity predominate over residues 63–83 (QKSTPQSQQLTSTTPQSQQQE). Position 76 is a phosphothreonine (Thr76).

Belongs to the MOB1/phocein family. As to quaternary structure, interacts with protein kinase CBK1 to form the RAM CBK1-MOB2 kinase complex.

It is found in the nucleus. The protein localises to the cytoplasm. In terms of biological role, functions as an activator subunit for the CBK1 protein kinase. Part of the regulation of ACE2 activity and cellular morphogenesis (RAM) signaling network. Required for coordinating polarized cell growth during interphase with the onset of mitosis. Required for mother/daughter cell separation after cytokinesis. Also has a role in the prevention of nuclear export of ACE2 from the daughter cell nucleus after mitotic exit. It coordinates ACE2-dependent transcription with mitotic exit network activation. This is CBK1 kinase activator protein MOB2 (MOB2) from Saccharomyces cerevisiae (strain ATCC 204508 / S288c) (Baker's yeast).